A 369-amino-acid chain; its full sequence is Anhydro-N-acetylmuramic acid kinase (369 aa).

Position 12–19 (12–19) interacts with ATP; that stretch reads GTSLDGVD.

Belongs to the anhydro-N-acetylmuramic acid kinase family.

It carries out the reaction 1,6-anhydro-N-acetyl-beta-muramate + ATP + H2O = N-acetyl-D-muramate 6-phosphate + ADP + H(+). It functions in the pathway amino-sugar metabolism; 1,6-anhydro-N-acetylmuramate degradation. It participates in cell wall biogenesis; peptidoglycan recycling. Functionally, catalyzes the specific phosphorylation of 1,6-anhydro-N-acetylmuramic acid (anhMurNAc) with the simultaneous cleavage of the 1,6-anhydro ring, generating MurNAc-6-P. Is required for the utilization of anhMurNAc either imported from the medium or derived from its own cell wall murein, and thus plays a role in cell wall recycling. This Escherichia coli (strain SE11) protein is Anhydro-N-acetylmuramic acid kinase.